The following is a 94-amino-acid chain: Large ribosomal subunit protein eL42 (94 aa).

The Zn(2+) site is built by cysteine 11, cysteine 14, cysteine 71, and cysteine 74. Residues 11–74 form a C4-type zinc finger; that stretch reads CPFCKRHTIH…LDLRFRCTVC (64 aa).

It belongs to the eukaryotic ribosomal protein eL42 family. In terms of assembly, part of the 50S ribosomal subunit. Zn(2+) serves as cofactor.

Its function is as follows. Binds to the 23S rRNA. The sequence is that of Large ribosomal subunit protein eL42 from Pyrococcus abyssi (strain GE5 / Orsay).